The following is an 83-amino-acid chain: Sulfur carrier protein TusA (83 aa).

The active-site Cysteine persulfide intermediate is the Cys-20.

Belongs to the sulfur carrier protein TusA family.

It localises to the cytoplasm. Sulfur carrier protein which probably makes part of a sulfur-relay system. The polypeptide is Sulfur carrier protein TusA (Pseudomonas fluorescens (strain SBW25)).